The chain runs to 282 residues: Protoheme IX farnesyltransferase (282 aa).

Helical transmembrane passes span 40 to 60 (LVLA…FNMV), 87 to 107 (AVLA…AVNP), 108 to 128 (YVFV…TVLL), 135 to 157 (SVVF…ATGG), 162 to 184 (GVLL…STYY), 204 to 224 (AGVV…FLAF), 228 to 248 (LISA…VAVL), and 261 to 281 (AYRA…LLVL).

This sequence belongs to the UbiA prenyltransferase family. Protoheme IX farnesyltransferase subfamily.

The protein localises to the cell membrane. It catalyses the reaction heme b + (2E,6E)-farnesyl diphosphate + H2O = Fe(II)-heme o + diphosphate. It functions in the pathway porphyrin-containing compound metabolism; heme O biosynthesis; heme O from protoheme: step 1/1. Its function is as follows. Converts heme B (protoheme IX) to heme O by substitution of the vinyl group on carbon 2 of heme B porphyrin ring with a hydroxyethyl farnesyl side group. The chain is Protoheme IX farnesyltransferase from Thermofilum pendens (strain DSM 2475 / Hrk 5).